The chain runs to 412 residues: Serine hydroxymethyltransferase (412 aa).

(6S)-5,6,7,8-tetrahydrofolate-binding positions include Leu117 and 121-123; that span reads GHL. Lys226 carries the post-translational modification N6-(pyridoxal phosphate)lysine. 349–351 contributes to the (6S)-5,6,7,8-tetrahydrofolate binding site; that stretch reads SPF.

It belongs to the SHMT family. In terms of assembly, homodimer. It depends on pyridoxal 5'-phosphate as a cofactor.

Its subcellular location is the cytoplasm. It carries out the reaction (6R)-5,10-methylene-5,6,7,8-tetrahydrofolate + glycine + H2O = (6S)-5,6,7,8-tetrahydrofolate + L-serine. It functions in the pathway one-carbon metabolism; tetrahydrofolate interconversion. Its pathway is amino-acid biosynthesis; glycine biosynthesis; glycine from L-serine: step 1/1. Functionally, catalyzes the reversible interconversion of serine and glycine with tetrahydrofolate (THF) serving as the one-carbon carrier. This reaction serves as the major source of one-carbon groups required for the biosynthesis of purines, thymidylate, methionine, and other important biomolecules. Also exhibits THF-independent aldolase activity toward beta-hydroxyamino acids, producing glycine and aldehydes, via a retro-aldol mechanism. This chain is Serine hydroxymethyltransferase, found in Geobacillus thermodenitrificans (strain NG80-2).